The sequence spans 535 residues: Probable galacturonosyltransferase 12 (535 aa).

Residues 1–37 are Cytoplasmic-facing; that stretch reads MQLHISPSLRHVTVVTGKGLREFIKVKVGSRRFSYQM. Residues 38–58 form a helical; Signal-anchor for type II membrane protein membrane-spanning segment; it reads VFYSLLFFTFLLRFVFVLSTV. The Lumenal portion of the chain corresponds to 59–535; it reads DTIDGDPSPC…FIKSCHIRAS (477 aa). N397 and N430 each carry an N-linked (GlcNAc...) asparagine glycan.

The protein belongs to the glycosyltransferase 8 family. As to expression, highly expressed in stems. Detected in roots, inflorescences, siliques, and leaves. Expressed in cells undergoing secondary wall thickening, including interfascicular fibers and primary and secondary xylem.

Its subcellular location is the golgi apparatus membrane. It functions in the pathway glycan metabolism; pectin biosynthesis. Functionally, involved in pectin assembly and/or distribution, and in the synthesis of secondary wall glucuronoxylan. Probably involved in the synthesis of the glycosyl sequence at the glucuronoxylan reducing end. May be involved in synthesis of a complex glycan primer for xylan synthesis. This chain is Probable galacturonosyltransferase 12 (GAUT12), found in Arabidopsis thaliana (Mouse-ear cress).